The following is a 370-amino-acid chain: MSLYHSLSIFLLLSLCHGSYSLQPRRVPHLDGILPNGNFEITPLKSNMKGRQIIGANSLPHWEIAGHVELVSGGPQPGGFYFPVPRGVHAVRLGNLGTISQNVRVKSGLVYSLTFGATRTCAQDENIKVSVPGQANELPLQTVFSSDGGDTYAWAFKATSDVVKVTFHNPGVQEDRTCGPLLDVVAIKEILPLRYTRGNLVKNGGFEIGPHVFANFSTGILIPARIQDFISPLPGWIVESLKPVKYIDRRHFKVPYGQGAVELVAGRESAIAQIIRTIAGKAYMLSFAVGDAQNGCHGSMMVEAFAGREPFKLSFMSEGKGAFKTGHFRFVADSDRTRLTFYSAFYHTKLHDFGHLCGPVLDSVVVTLAR.

Positions 1–21 (MSLYHSLSIFLLLSLCHGSYS) are cleaved as a signal peptide. Asparagine 215 is a glycosylation site (N-linked (GlcNAc...) asparagine).

Expressed in primary and lateral roots, stigmatic papillae and hypocotyls.

It localises to the secreted. The protein localises to the cell wall. In terms of biological role, prevents hypocotyl epidermal cells elongation by modulating the pectin status in cell walls. Likely regulates pectin methylesterification degree during cell separation and elongation, including upon root-knot nematode Meloidogyne incognita infection. The chain is Protein TEEBE from Arabidopsis thaliana (Mouse-ear cress).